A 201-amino-acid chain; its full sequence is Large ribosomal subunit protein uL4 (201 aa).

The interval 44–71 is disordered; sequence RAQKTRAEVSGSGKKPWRQKGTGRARSG.

The protein belongs to the universal ribosomal protein uL4 family. Part of the 50S ribosomal subunit.

Functionally, one of the primary rRNA binding proteins, this protein initially binds near the 5'-end of the 23S rRNA. It is important during the early stages of 50S assembly. It makes multiple contacts with different domains of the 23S rRNA in the assembled 50S subunit and ribosome. Forms part of the polypeptide exit tunnel. The polypeptide is Large ribosomal subunit protein uL4 (Proteus mirabilis (strain HI4320)).